The following is a 170-amino-acid chain: Ribosome maturation factor RimP (170 aa).

Belongs to the RimP family.

It localises to the cytoplasm. Functionally, required for maturation of 30S ribosomal subunits. This Chlorobaculum parvum (strain DSM 263 / NCIMB 8327) (Chlorobium vibrioforme subsp. thiosulfatophilum) protein is Ribosome maturation factor RimP.